The chain runs to 1056 residues: 120.7 kDa protein in NOF-FB transposable element (1056 aa).

The interval 716–749 (KTIKPTEGNDAEDNDTDDENKEMDLSEQPKEKPR) is disordered. Positions 724–736 (NDAEDNDTDDENK) are enriched in acidic residues. Residues 737 to 749 (EMDLSEQPKEKPR) show a composition bias toward basic and acidic residues.

Its subcellular location is the nucleus. Its function is as follows. May be involved in the transposition of NOF-FB and other FB elements. The sequence is that of 120.7 kDa protein in NOF-FB transposable element (NOF) from Drosophila melanogaster (Fruit fly).